Consider the following 243-residue polypeptide: UPF0702 transmembrane protein YkjA (243 aa).

The next 3 membrane-spanning stretches (helical) occupy residues 3-23 (WMVW…YILF), 34-54 (MNNF…EPIL), and 58-78 (LPMS…MSKL).

The protein belongs to the UPF0702 family.

The protein localises to the cell membrane. The chain is UPF0702 transmembrane protein YkjA (ykjA) from Bacillus subtilis (strain 168).